The following is a 467-amino-acid chain: Membrane-bound lytic murein transglycosylase F (467 aa).

Residues 1 to 33 (MTELFRHSKHLLASLALLSVLGLMLAMHPSPSA) form the signal peptide. The tract at residues 34 to 266 (IERIMARGEL…KLEDRFYGHV (233 aa)) is non-LT domain. The interval 268-467 (QFNLYAARSF…RRDDTLIALN (200 aa)) is LT domain. Residue Glu-313 is part of the active site.

This sequence in the N-terminal section; belongs to the bacterial solute-binding protein 3 family. In the C-terminal section; belongs to the transglycosylase Slt family.

The protein resides in the cell outer membrane. It catalyses the reaction Exolytic cleavage of the (1-&gt;4)-beta-glycosidic linkage between N-acetylmuramic acid (MurNAc) and N-acetylglucosamine (GlcNAc) residues in peptidoglycan, from either the reducing or the non-reducing ends of the peptidoglycan chains, with concomitant formation of a 1,6-anhydrobond in the MurNAc residue.. Murein-degrading enzyme that degrades murein glycan strands and insoluble, high-molecular weight murein sacculi, with the concomitant formation of a 1,6-anhydromuramoyl product. Lytic transglycosylases (LTs) play an integral role in the metabolism of the peptidoglycan (PG) sacculus. Their lytic action creates space within the PG sacculus to allow for its expansion as well as for the insertion of various structures such as secretion systems and flagella. In Alcanivorax borkumensis (strain ATCC 700651 / DSM 11573 / NCIMB 13689 / SK2), this protein is Membrane-bound lytic murein transglycosylase F.